The following is a 150-amino-acid chain: UPF0260 protein CGSHiGG_00425 (150 aa).

The protein belongs to the UPF0260 family.

In Haemophilus influenzae (strain PittGG), this protein is UPF0260 protein CGSHiGG_00425.